Consider the following 214-residue polypeptide: UPF0056 membrane protein aq_540 (214 aa).

6 helical membrane passes run 17-37, 47-67, 73-93, 122-142, 153-173, and 185-205; these read FLSL…ISLM, VIAL…LISG, FMGI…FLIA, LIPL…VLVL, VALF…YSLS, and INLI…QFVV.

Belongs to the UPF0056 (MarC) family.

Its subcellular location is the cell membrane. The polypeptide is UPF0056 membrane protein aq_540 (Aquifex aeolicus (strain VF5)).